The sequence spans 158 residues: Phosphopantetheine adenylyltransferase (158 aa).

Thr-10 lines the substrate pocket. Residues 10-11 and His-18 each bind ATP; that span reads TF. Residues Lys-42, Leu-74, and Arg-88 each coordinate substrate. ATP contacts are provided by residues 89–91, Glu-99, and 124–130; these read GIR and WRYLSST.

Belongs to the bacterial CoaD family. In terms of assembly, homohexamer. Mg(2+) is required as a cofactor.

The protein localises to the cytoplasm. It catalyses the reaction (R)-4'-phosphopantetheine + ATP + H(+) = 3'-dephospho-CoA + diphosphate. The protein operates within cofactor biosynthesis; coenzyme A biosynthesis; CoA from (R)-pantothenate: step 4/5. Its function is as follows. Reversibly transfers an adenylyl group from ATP to 4'-phosphopantetheine, yielding dephospho-CoA (dPCoA) and pyrophosphate. The chain is Phosphopantetheine adenylyltransferase from Actinobacillus pleuropneumoniae serotype 3 (strain JL03).